We begin with the raw amino-acid sequence, 487 residues long: 2-aminomuconic semialdehyde dehydrogenase (487 aa).

Gly231–Ala236 provides a ligand contact to NAD(+). The Proton acceptor role is filled by Glu253. Cys287 functions as the Nucleophile in the catalytic mechanism. Ser362 is modified (phosphoserine).

The protein belongs to the aldehyde dehydrogenase family. Detected in hepatocytes and in proximal and distal convoluted tubules in kidney cortex (at protein level). Highly expressed in adult liver and in kidney cortex. First detected in embryonic liver after 15 days of development.

It is found in the cytoplasm. The catalysed reaction is 2-aminomuconate 6-semialdehyde + NAD(+) + H2O = (2Z,4E)-2-aminomuconate + NADH + 2 H(+). It functions in the pathway amino-acid degradation; L-kynurenine degradation. Catalyzes the NAD-dependent oxidation of 2-aminomuconic semialdehyde of the kynurenine metabolic pathway in L-tryptophan degradation. The chain is 2-aminomuconic semialdehyde dehydrogenase (Aldh8a1) from Mus musculus (Mouse).